The chain runs to 465 residues: Tyrosine 3-monooxygenase (465 aa).

The Fe cation site is built by histidine 294, histidine 299, and glutamate 339.

The protein belongs to the biopterin-dependent aromatic amino acid hydroxylase family. Fe(2+) serves as cofactor.

The protein resides in the cytoplasm. It localises to the perinuclear region. The enzyme catalyses (6R)-L-erythro-5,6,7,8-tetrahydrobiopterin + L-tyrosine + O2 = (4aS,6R)-4a-hydroxy-L-erythro-5,6,7,8-tetrahydrobiopterin + L-dopa. Its pathway is catecholamine biosynthesis; dopamine biosynthesis; dopamine from L-tyrosine: step 1/2. The polypeptide is Tyrosine 3-monooxygenase (TH) (Schistosoma mansoni (Blood fluke)).